Consider the following 279-residue polypeptide: DegV domain-containing protein CPE1310 (279 aa).

Positions 4–277 (IKIITDSTCD…PKVCALFYVE (274 aa)) constitute a DegV domain. The hexadecanoate site is built by threonine 62 and serine 94.

Its function is as follows. May bind long-chain fatty acids, such as palmitate, and may play a role in lipid transport or fatty acid metabolism. The protein is DegV domain-containing protein CPE1310 of Clostridium perfringens (strain 13 / Type A).